The chain runs to 616 residues: Chaperone protein HscA (616 aa).

The protein belongs to the heat shock protein 70 family.

In terms of biological role, chaperone involved in the maturation of iron-sulfur cluster-containing proteins. Has a low intrinsic ATPase activity which is markedly stimulated by HscB. Involved in the maturation of IscU. This chain is Chaperone protein HscA, found in Proteus mirabilis (strain HI4320).